Here is an 86-residue protein sequence, read N- to C-terminus: Sec-independent protein translocase protein TatA (86 aa).

Residues 1 to 21 traverse the membrane as a helical segment; that stretch reads MGISIWQLLIILAIVLVLFGA.

This sequence belongs to the TatA/E family. In terms of assembly, the Tat system comprises two distinct complexes: a TatABC complex, containing multiple copies of TatA, TatB and TatC subunits, and a separate TatA complex, containing only TatA subunits. Substrates initially bind to the TatABC complex, which probably triggers association of the separate TatA complex to form the active translocon.

The protein resides in the cell inner membrane. Part of the twin-arginine translocation (Tat) system that transports large folded proteins containing a characteristic twin-arginine motif in their signal peptide across membranes. TatA could form the protein-conducting channel of the Tat system. The polypeptide is Sec-independent protein translocase protein TatA (Hydrogenovibrio crunogenus (strain DSM 25203 / XCL-2) (Thiomicrospira crunogena)).